A 139-amino-acid chain; its full sequence is Putative nickel-responsive regulator (139 aa).

Positions 79, 90, 92, and 98 each coordinate Ni(2+).

Belongs to the transcriptional regulatory CopG/NikR family. It depends on Ni(2+) as a cofactor.

Its function is as follows. Transcriptional regulator. The chain is Putative nickel-responsive regulator from Anaeromyxobacter dehalogenans (strain 2CP-C).